Consider the following 428-residue polypeptide: Adenylosuccinate synthetase (428 aa).

Residues 11 to 17 (GDEGKGK) and 39 to 41 (GHT) each bind GTP. Asp-12 acts as the Proton acceptor in catalysis. Mg(2+) contacts are provided by Asp-12 and Gly-39. IMP is bound by residues 12-15 (DEGK), 37-40 (NAGH), Thr-130, Arg-144, Asn-226, Thr-241, and Arg-305. His-40 (proton donor) is an active-site residue. Residue 301-307 (VTTGRKR) participates in substrate binding. GTP contacts are provided by residues Arg-307, 333 to 335 (KLD), and 415 to 417 (GTG).

Belongs to the adenylosuccinate synthetase family. Homodimer. Mg(2+) serves as cofactor.

The protein localises to the cytoplasm. It carries out the reaction IMP + L-aspartate + GTP = N(6)-(1,2-dicarboxyethyl)-AMP + GDP + phosphate + 2 H(+). It participates in purine metabolism; AMP biosynthesis via de novo pathway; AMP from IMP: step 1/2. In terms of biological role, plays an important role in the de novo pathway and in the salvage pathway of purine nucleotide biosynthesis. Catalyzes the first committed step in the biosynthesis of AMP from IMP. This chain is Adenylosuccinate synthetase, found in Komagataella phaffii (strain GS115 / ATCC 20864) (Yeast).